The chain runs to 336 residues: tRNA-cytidine(32) 2-sulfurtransferase (336 aa).

The disordered stretch occupies residues 1 to 42 (MNAPDTLTGLEANAPVTEEAPAASEAERKRAHTRREQKEQYE). Residues 75–80 (SGGKDS) carry the PP-loop motif motif. 3 residues coordinate [4Fe-4S] cluster: Cys-150, Cys-153, and Cys-241. The disordered stretch occupies residues 301 to 328 (PHGDIAFDEEPCSADSASNQTQRPSQTV). Residues 315 to 328 (DSASNQTQRPSQTV) show a composition bias toward polar residues.

This sequence belongs to the TtcA family. As to quaternary structure, homodimer. It depends on Mg(2+) as a cofactor. The cofactor is [4Fe-4S] cluster.

The protein localises to the cytoplasm. The enzyme catalyses cytidine(32) in tRNA + S-sulfanyl-L-cysteinyl-[cysteine desulfurase] + AH2 + ATP = 2-thiocytidine(32) in tRNA + L-cysteinyl-[cysteine desulfurase] + A + AMP + diphosphate + H(+). Its pathway is tRNA modification. In terms of biological role, catalyzes the ATP-dependent 2-thiolation of cytidine in position 32 of tRNA, to form 2-thiocytidine (s(2)C32). The sulfur atoms are provided by the cysteine/cysteine desulfurase (IscS) system. The polypeptide is tRNA-cytidine(32) 2-sulfurtransferase (Paraburkholderia phymatum (strain DSM 17167 / CIP 108236 / LMG 21445 / STM815) (Burkholderia phymatum)).